A 63-amino-acid chain; its full sequence is Large ribosomal subunit protein uL29 (63 aa).

It belongs to the universal ribosomal protein uL29 family.

The chain is Large ribosomal subunit protein uL29 from Christiangramia forsetii (strain DSM 17595 / CGMCC 1.15422 / KT0803) (Gramella forsetii).